The following is a 537-amino-acid chain: Chaperonin GroEL 3 (537 aa).

ATP-binding positions include 30–33 (TLGP), 87–91 (DGTTT), glycine 414, 480–482 (DAL), and aspartate 496.

It belongs to the chaperonin (HSP60) family. Forms a cylinder of 14 subunits composed of two heptameric rings stacked back-to-back. Interacts with the co-chaperonin GroES.

It localises to the cytoplasm. It catalyses the reaction ATP + H2O + a folded polypeptide = ADP + phosphate + an unfolded polypeptide.. Its function is as follows. Together with its co-chaperonin GroES, plays an essential role in assisting protein folding. The GroEL-GroES system forms a nano-cage that allows encapsulation of the non-native substrate proteins and provides a physical environment optimized to promote and accelerate protein folding. In Acaryochloris marina (strain MBIC 11017), this protein is Chaperonin GroEL 3.